The sequence spans 722 residues: Polyribonucleotide nucleotidyltransferase (722 aa).

Positions 495 and 501 each coordinate Mg(2+). The 60-residue stretch at 561–620 (PRLYVMKINPEKIREVIGKGGETIRSITKDTGCEINIEEDGTITIASVSSEGAEAAKKRI) folds into the KH domain. The S1 motif domain occupies 630–700 (GKVYEGTVVK…DRGRIRLSIK (71 aa)).

It belongs to the polyribonucleotide nucleotidyltransferase family. It depends on Mg(2+) as a cofactor.

Its subcellular location is the cytoplasm. It catalyses the reaction RNA(n+1) + phosphate = RNA(n) + a ribonucleoside 5'-diphosphate. Involved in mRNA degradation. Catalyzes the phosphorolysis of single-stranded polyribonucleotides processively in the 3'- to 5'-direction. In Chromobacterium violaceum (strain ATCC 12472 / DSM 30191 / JCM 1249 / CCUG 213 / NBRC 12614 / NCIMB 9131 / NCTC 9757 / MK), this protein is Polyribonucleotide nucleotidyltransferase.